The primary structure comprises 272 residues: Protein UL24 homolog (272 aa).

This sequence belongs to the herpesviridae UL24 family.

The protein localises to the virion. Its subcellular location is the host cytoplasm. It is found in the host nucleus. It localises to the host nucleolus. The protein resides in the host Golgi apparatus. Functionally, may participate in nuclear egress of viral particles. Plays a role in the dispersal of several host nucleolar proteins including NCL/nucleolin and NPM1. Since deletion of host NCL/nucleolin negatively impact on nuclear egress, UL24 supposedly acts on this process through its effect on host nucleoli. The protein is Protein UL24 homolog of Equine herpesvirus 1 (strain V592) (EHV-1).